The chain runs to 285 residues: Shikimate dehydrogenase (NADP(+)) (285 aa).

Shikimate contacts are provided by residues 19–21 (SLS) and Thr-66. Lys-70 acts as the Proton acceptor in catalysis. Asn-91 and Asp-107 together coordinate shikimate. NADP(+) is bound by residues 129-133 (GSGGA) and Leu-228. A shikimate-binding site is contributed by Tyr-230. Gly-251 serves as a coordination point for NADP(+).

Belongs to the shikimate dehydrogenase family. As to quaternary structure, homodimer.

It catalyses the reaction shikimate + NADP(+) = 3-dehydroshikimate + NADPH + H(+). It participates in metabolic intermediate biosynthesis; chorismate biosynthesis; chorismate from D-erythrose 4-phosphate and phosphoenolpyruvate: step 4/7. Its function is as follows. Involved in the biosynthesis of the chorismate, which leads to the biosynthesis of aromatic amino acids. Catalyzes the reversible NADPH linked reduction of 3-dehydroshikimate (DHSA) to yield shikimate (SA). The polypeptide is Shikimate dehydrogenase (NADP(+)) (Prochlorococcus marinus subsp. pastoris (strain CCMP1986 / NIES-2087 / MED4)).